Reading from the N-terminus, the 630-residue chain is MIYHEIYDVIVVGGGHAGTEAALAPARMGLKTLLLTHNIDTLGQMSCNPAIGGIGKGHLVKEIDAMGGLMAIAIDQAGIQFRTLNSSKGPAVRATRAQADRVLYRQAVRTALENQPNLDIFQQEVVDILVENNRAVGAVTKMRLTFKARSVVLTAGTFLAGKIHIGLDNYAGGRAGDPAATMLADRLRDLNLRIDRLKTGTPPRLDARTINFDVLAKQHGDAELPVMSFMGSVDLHPRQIPCYITHTNEQTHDLIRNSLDRSPMYTGVIEGIGPRYCPSIEDKVMRFSDRNSHQIYLEPEGLSTIEVYPNGISTSLPFDVQMGIVNSMKGLEKTRIIKPGYAIEYDYFDPRDLKPTLETKAIEGLFFAGQINGTTGYEEAAAQGLLAGINAALQVQGKEAWFPTRDLAYTGVLVDDLCTLGTKEPYRVFTSRAEYRLLLREDNADIRLTPIAHELGLIDDARWARFNQKMENIEREHERLKQIWIHPQSEHLAVVNELVNSPLTREASGEDLLRRPEVTYDKLTQVAAFAPALDDKQAAEQVEISIKYQGYIEHQQNEIERHKRHENTLIPAEFDYDKVESLSNEVRAKLMQHRPVSIGQASRISGITPAAISILLVNLKKQGMLKRGEL.

13 to 18 lines the FAD pocket; the sequence is GGGHAG. Residue 273–287 participates in NAD(+) binding; that stretch reads GPRYCPSIEDKVMRF.

It belongs to the MnmG family. In terms of assembly, homodimer. Heterotetramer of two MnmE and two MnmG subunits. FAD serves as cofactor.

It is found in the cytoplasm. Functionally, NAD-binding protein involved in the addition of a carboxymethylaminomethyl (cmnm) group at the wobble position (U34) of certain tRNAs, forming tRNA-cmnm(5)s(2)U34. This chain is tRNA uridine 5-carboxymethylaminomethyl modification enzyme MnmG, found in Actinobacillus pleuropneumoniae serotype 7 (strain AP76).